The following is a 181-amino-acid chain: Protein GrpE (181 aa).

The segment covering 1 to 24 (MSEENIGENEVETPETEPSAEAEV) has biased composition (acidic residues). Residues 1 to 26 (MSEENIGENEVETPETEPSAEAEVES) form a disordered region.

This sequence belongs to the GrpE family. As to quaternary structure, homodimer.

The protein localises to the cytoplasm. Participates actively in the response to hyperosmotic and heat shock by preventing the aggregation of stress-denatured proteins, in association with DnaK and GrpE. It is the nucleotide exchange factor for DnaK and may function as a thermosensor. Unfolded proteins bind initially to DnaJ; upon interaction with the DnaJ-bound protein, DnaK hydrolyzes its bound ATP, resulting in the formation of a stable complex. GrpE releases ADP from DnaK; ATP binding to DnaK triggers the release of the substrate protein, thus completing the reaction cycle. Several rounds of ATP-dependent interactions between DnaJ, DnaK and GrpE are required for fully efficient folding. This is Protein GrpE from Rhizorhabdus wittichii (strain DSM 6014 / CCUG 31198 / JCM 15750 / NBRC 105917 / EY 4224 / RW1) (Sphingomonas wittichii).